A 183-amino-acid polypeptide reads, in one-letter code: MTATAQQLEFLKNSIKSIQDYPKLGILFRDVTSLLEDPKAYALSIELLVERYKNAGITKVVGTEARGFLFGAPVALGLGVGFVPVRKPRKLPRETIAETYELEYSTDQLEIHVDAIKPGDNVLVVDDLLATGGTIEATVKLIRRLGGKVTDAAFIINLFDLGGEQRLEKQGITCYSLVPFPGH.

Belongs to the purine/pyrimidine phosphoribosyltransferase family. Homodimer.

It is found in the cytoplasm. The catalysed reaction is AMP + diphosphate = 5-phospho-alpha-D-ribose 1-diphosphate + adenine. It participates in purine metabolism; AMP biosynthesis via salvage pathway; AMP from adenine: step 1/1. Catalyzes a salvage reaction resulting in the formation of AMP, that is energically less costly than de novo synthesis. This Salmonella gallinarum (strain 287/91 / NCTC 13346) protein is Adenine phosphoribosyltransferase.